The chain runs to 322 residues: NADH-cytochrome b5 reductase 2 (322 aa).

The chain crosses the membrane as a helical span at residues 31 to 48; that stretch reads LAPIYAAVGITGVGVGLY. Residues 72-176 enclose the FAD-binding FR-type domain; the sequence is QGWFDLKLSE…KGPIVKYPWE (105 aa). An FAD-binding site is contributed by 179-214; it reads KHNHICLIAGGTGITPMYQLAREIFKNPEDQTKVTL.

Belongs to the flavoprotein pyridine nucleotide cytochrome reductase family. It depends on FAD as a cofactor.

The protein resides in the mitochondrion outer membrane. It catalyses the reaction 2 Fe(III)-[cytochrome b5] + NADH = 2 Fe(II)-[cytochrome b5] + NAD(+) + H(+). In terms of biological role, may mediate the reduction of outer membrane cytochrome b5. In Aspergillus niger (strain ATCC MYA-4892 / CBS 513.88 / FGSC A1513), this protein is NADH-cytochrome b5 reductase 2 (mcr1).